We begin with the raw amino-acid sequence, 281 residues long: Oxidoreductase-like protein SRL4 (281 aa).

NADP(+) is bound by residues leucine 39, threonine 60, lysine 67, lysine 152, and lysine 197. Lysine 197 (lowers pKa of active site Tyr) is an active-site residue.

Belongs to the short-chain dehydrogenases/reductases (SDR) family.

Its function is as follows. May be involved in the regulation of dNTP production. Induces the SOS system when expressed in E.coli, therefore, it may play a role in DNA metabolism and/or in genome stability. The protein is Oxidoreductase-like protein SRL4 (SRL4) of Saccharomyces cerevisiae (strain ATCC 204508 / S288c) (Baker's yeast).